Consider the following 172-residue polypeptide: Calcium channel flower homolog (172 aa).

Topologically, residues 1-32 (MSSSGGAPGASASSAPPAQEEGMTWWYRWLCR) are cytoplasmic. Residues 33 to 53 (LSGVLGAVSCAISGLFNCITI) traverse the membrane as a helical segment. Residues 54–57 (HPLN) are Extracellular-facing. The chain crosses the membrane as a helical span at residues 58 to 78 (IAAGVWMIMNAFILLLCEAPF). Topologically, residues 79–102 (CCQFIEFANTVAEKVDRLRSWQKA) are cytoplasmic. A helical membrane pass occupies residues 103–123 (VFYCGMAVVPIVISLTLTTLL). The Extracellular segment spans residues 124-125 (GN). Residues 126-142 (AIAFATGVLYGLSALGK) traverse the membrane as a helical segment. Residues 143–172 (KGDAISYARIQQQRQQADEEKLAETLEGEL) lie on the Cytoplasmic side of the membrane.

Belongs to the calcium channel flower family. As to quaternary structure, interacts with adaptor protein complex 2 (AP-2). Detected in skin cells at low levels of expression (at protein level).

It localises to the cell membrane. Its subcellular location is the cytoplasmic vesicle. It is found in the secretory vesicle. The protein localises to the synaptic vesicle. The protein resides in the golgi apparatus. It localises to the vesicle. Its subcellular location is the early endosome. It is found in the recycling endosome. The protein localises to the endoplasmic reticulum membrane. In terms of biological role, transmembrane protein which mediates synaptic endocytosis and fitness-based cell culling. In response to different stimulus strengths, controls two major modes of synaptic vesicle (SV) retrieval in hippocampal neurons; Clathrin-mediated endocytosis (CME) in response to mild stimulation and activity-dependent bulk endocytosis (ADBE) in response to strong stimulation. In cytotoxic T-lymphoocytes (CTLs) facilitates calcium-dependent endocytosis of cytotoxic granules at the immuno synapse. Different isoforms work as fitness fingerprints in 'loser' and 'winner' cells and thereby mediate win/lose decisions as part of the cell competition process. Functionally, functions with the other flower isoforms to produce tissue-specific fitness fingerprints that identify unfit or fit cells during cell selection processes in order to maintain tissue health. During cell competition, if levels of this isoform in cells is higher than in the surrounding neighboring cells, the cells are recognized as 'winner' cells, and do not undergo elimination via apoptosis. Functions with the other flower isoforms to produce tissue-specific fitness fingerprints that identify unfit or fit cells during cell selection processes in order to maintain tissue health. During cell competition, if levels of this isoform in unfit cells is higher than in the surrounding neighboring cells, the cells are recognized as 'loser' cells, and undergo elimination via apoptosis to be replaced by the surrounding healthy 'winner' cell population. The polypeptide is Calcium channel flower homolog (CACFD1) (Homo sapiens (Human)).